Reading from the N-terminus, the 90-residue chain is uncharacterized protein (90 aa).

An N-terminal signal peptide occupies residues 1 to 20 (MAYKMLQVVLCSTLLIGALG).

This is an uncharacterized protein from Homo sapiens (Human).